A 231-amino-acid polypeptide reads, in one-letter code: Large ribosomal subunit protein uL1 (231 aa).

The protein belongs to the universal ribosomal protein uL1 family. Part of the 50S ribosomal subunit.

In terms of biological role, binds directly to 23S rRNA. The L1 stalk is quite mobile in the ribosome, and is involved in E site tRNA release. Its function is as follows. Protein L1 is also a translational repressor protein, it controls the translation of the L11 operon by binding to its mRNA. The protein is Large ribosomal subunit protein uL1 of Halorhodospira halophila (strain DSM 244 / SL1) (Ectothiorhodospira halophila (strain DSM 244 / SL1)).